A 389-amino-acid polypeptide reads, in one-letter code: Packaging protein 3 (389 aa).

The interaction with packaging protein 1 stretch occupies residues 1–131 (MHPVLRQMKP…VKAEVNFQTT (131 aa)). The tract at residues 350 to 389 (EKENPDGSVSFQQHERGTQSHENGGHAEPAYSRRQLGRFY) is disordered. Positions 362–374 (QHERGTQSHENGG) are enriched in basic and acidic residues.

Belongs to the adenoviridae packaging protein 3 family. As to quaternary structure, part of the genome packaging complex composed of packaging proteins 1, 2 and 3; this complex specifically binds to the packaging sequence on the left end of viral genomic DNA and performs packaging of the viral genome. Interacts with hexon-linking protein IIIa; this interaction is required to promote correct genome packaging. Cleaved at different sites by the viral protease during virion maturation.

The protein localises to the host nucleus. In terms of biological role, involved in viral genome packaging through its interaction with packaging proteins 1 and 2. After proteolytic cleavage by adenovirus protease, L1 52/55k protein is removed from the capsid during viral maturation. The polypeptide is Packaging protein 3 (Canine adenovirus serotype 1 (strain CLL) (CAdV-1)).